We begin with the raw amino-acid sequence, 193 residues long: Major intrinsically disordered NOTCH2-binding receptor 1-like homolog (193 aa).

Residue Ser-82 is modified to Phosphoserine. Asn-128 carries an N-linked (GlcNAc...) asparagine glycan. A helical transmembrane segment spans residues Gly-172–Phe-192.

The protein belongs to the MINAR family. Interacts with NOTCH2. Widely expressed in the cortex and Purkinje cells of cerebellum. Expressed in the inner ear, mainly in the hair cells, spiral ganglia, the spiral limbus, and the stria vascularis.

The protein localises to the lysosome membrane. It localises to the endoplasmic reticulum membrane. Functionally, binds cholesterol and may regulate the distribution and homeostasis of cholesterol in hair cells. May play a role in angiogenesis. The sequence is that of Major intrinsically disordered NOTCH2-binding receptor 1-like homolog from Mus musculus (Mouse).